Consider the following 128-residue polypeptide: MRHRKSGRQLNRNSSHRQALFRNLASALVSHEIIKTTLPKAKELRRVVEPLITLAKVDSVANRRLAFARTRNIETVAKLFNELGPRFANRAGGYTRILKCGFRAGDNAPMAYIELVDRPEVAAEQAAE.

It belongs to the bacterial ribosomal protein bL17 family. Part of the 50S ribosomal subunit. Contacts protein L32.

This chain is Large ribosomal subunit protein bL17, found in Glaesserella parasuis serovar 5 (strain SH0165) (Haemophilus parasuis).